Reading from the N-terminus, the 287-residue chain is MTYTTRQIGAKNTLEYKVYIEKDGKPVSAFHDIPLYADKENNIFNMVVEIPRWTNAKLEITKEETLNPIIQDTKKGKLRFVRNCFPHHGYIHNYGAFPQTWEDPNVSHPETKAVGDNDPIDVLEIGETIAYTGQVKQVKALGIMALLDEGETDWKVIAIDINDPLAPKLNDIEDVEKYFPGLLRATNEWFRIYKIPDGKPENQFAFSGEAKNKKYALDIIKETHDSWKQLIAGKSSDSKGIDLTNVTLPDTPTYSKAASDAIPPASPKADAPIDKSIDKWFFISGSV.

Phosphothreonine is present on T65. Residue R79 participates in diphosphate binding. Residue Y90 is the Proton donor of the active site. Positions 116, 121, and 153 each coordinate Mg(2+). K239 is covalently cross-linked (Glycyl lysine isopeptide (Lys-Gly) (interchain with G-Cter in ubiquitin)). T251 is modified (phosphothreonine). S266 carries the post-translational modification Phosphoserine. A Glycyl lysine isopeptide (Lys-Gly) (interchain with G-Cter in ubiquitin) cross-link involves residue K279. S286 carries the post-translational modification Phosphoserine.

The protein belongs to the PPase family. In terms of assembly, homodimer. Requires Mg(2+) as cofactor.

It localises to the cytoplasm. It catalyses the reaction diphosphate + H2O = 2 phosphate + H(+). This Saccharomyces cerevisiae (strain ATCC 204508 / S288c) (Baker's yeast) protein is Inorganic pyrophosphatase (IPP1).